Reading from the N-terminus, the 334-residue chain is Trans-1,2-dihydrobenzene-1,2-diol dehydrogenase (334 aa).

The protein belongs to the Gfo/Idh/MocA family. In terms of assembly, homodimer.

The enzyme catalyses (1R,2R)-1,2-dihydrobenzene-1,2-diol + NADP(+) = catechol + NADPH + H(+). It carries out the reaction D-xylose + NADP(+) = D-xylono-1,5-lactone + NADPH + H(+). The sequence is that of Trans-1,2-dihydrobenzene-1,2-diol dehydrogenase (dhdh) from Danio rerio (Zebrafish).